We begin with the raw amino-acid sequence, 286 residues long: UDP-3-O-acyl-N-acetylglucosamine deacetylase (286 aa).

3 residues coordinate Zn(2+): His-79, His-237, and Asp-241. The active-site Proton donor is His-264.

It belongs to the LpxC family. The cofactor is Zn(2+).

The catalysed reaction is a UDP-3-O-[(3R)-3-hydroxyacyl]-N-acetyl-alpha-D-glucosamine + H2O = a UDP-3-O-[(3R)-3-hydroxyacyl]-alpha-D-glucosamine + acetate. Its pathway is glycolipid biosynthesis; lipid IV(A) biosynthesis; lipid IV(A) from (3R)-3-hydroxytetradecanoyl-[acyl-carrier-protein] and UDP-N-acetyl-alpha-D-glucosamine: step 2/6. Functionally, catalyzes the hydrolysis of UDP-3-O-myristoyl-N-acetylglucosamine to form UDP-3-O-myristoylglucosamine and acetate, the committed step in lipid A biosynthesis. The chain is UDP-3-O-acyl-N-acetylglucosamine deacetylase from Chlamydia trachomatis serovar A (strain ATCC VR-571B / DSM 19440 / HAR-13).